A 123-amino-acid polypeptide reads, in one-letter code: MNIFIKQNSSTVKRRYPLQKFVLKFLWLEKNLAVTVDQVTNRGNSPITEYFFWPRKDAWEELKDALANKPWISYDESIALLNQTTDVINYWQEDEKKPSLSEAQAKFPNCIFTDKFANCLYEN.

Belongs to the chloroplast-specific ribosomal protein cS23 family. In terms of assembly, part of the 30S ribosomal subunit.

The protein resides in the plastid. It localises to the chloroplast. Functionally, probably a ribosomal protein or a ribosome-associated protein. This Mesostigma viride (Green alga) protein is Small ribosomal subunit protein cS23 (ycf65).